The chain runs to 156 residues: Transcription elongation factor GreA (156 aa).

The stretch at 1–32 forms a coiled coil; it reads MKKVRLTREGYEKLKKELEDLKRKFMYEISER.

Belongs to the GreA/GreB family.

Functionally, necessary for efficient RNA polymerase transcription elongation past template-encoded arresting sites. The arresting sites in DNA have the property of trapping a certain fraction of elongating RNA polymerases that pass through, resulting in locked ternary complexes. Cleavage of the nascent transcript by cleavage factors such as GreA or GreB allows the resumption of elongation from the new 3'terminus. GreA releases sequences of 2 to 3 nucleotides. This Thermotoga sp. (strain RQ2) protein is Transcription elongation factor GreA.